Reading from the N-terminus, the 209-residue chain is MTLASQIATQLLDIKAVYLKPEDPFTWASGIKSPIYTDNRVTLSYPKTRDLIENGFVETIRAHFPEVEVIAGTATAGIPHGAIIADKMTLPFAYIRSKLKDHGAGNQIEGRVLKGQKMVIIEDLISTGGSVLDAAAAASREGADVLGVVAIFTYELPKASQNFKEAGIKLITLSNYTELIAVAKLQGYITNDGLHLLKKFKEDQVNWQQ.

Residues Arg96, Lys100, His102, and 122 to 130 contribute to the 5-phospho-alpha-D-ribose 1-diphosphate site; that span reads EDLISTGGS. Residue Ser126 coordinates orotate.

It belongs to the purine/pyrimidine phosphoribosyltransferase family. PyrE subfamily. Homodimer. The cofactor is Mg(2+).

It catalyses the reaction orotidine 5'-phosphate + diphosphate = orotate + 5-phospho-alpha-D-ribose 1-diphosphate. It participates in pyrimidine metabolism; UMP biosynthesis via de novo pathway; UMP from orotate: step 1/2. Functionally, catalyzes the transfer of a ribosyl phosphate group from 5-phosphoribose 1-diphosphate to orotate, leading to the formation of orotidine monophosphate (OMP). In Streptococcus pyogenes serotype M5 (strain Manfredo), this protein is Orotate phosphoribosyltransferase.